The following is a 407-amino-acid chain: Serine/threonine transporter SstT (407 aa).

9 helical membrane passes run 10–30 (AKGN…LIGI), 42–62 (LGIL…FILI), 81–101 (IIIL…LANF), 141–161 (ALSS…GAAL), 179–199 (VLKI…GLVA), 218–238 (ILLV…IVFF), 245–267 (FPLI…SSAA), 288–308 (ISIP…IAIL), and 316–336 (VGIE…TFAA).

Belongs to the dicarboxylate/amino acid:cation symporter (DAACS) (TC 2.A.23) family.

It localises to the cell inner membrane. The catalysed reaction is L-serine(in) + Na(+)(in) = L-serine(out) + Na(+)(out). It catalyses the reaction L-threonine(in) + Na(+)(in) = L-threonine(out) + Na(+)(out). Functionally, involved in the import of serine and threonine into the cell, with the concomitant import of sodium (symport system). The sequence is that of Serine/threonine transporter SstT from Campylobacter jejuni subsp. doylei (strain ATCC BAA-1458 / RM4099 / 269.97).